A 373-amino-acid polypeptide reads, in one-letter code: tRNA-specific 2-thiouridylase MnmA (373 aa).

Residues 12-19 (GMSGGVDS) and methionine 38 contribute to the ATP site. The interval 98-100 (NPD) is interaction with target base in tRNA. Cysteine 103 acts as the Nucleophile in catalysis. Cysteine 103 and cysteine 200 are disulfide-bonded. Glycine 127 contacts ATP. The tract at residues 150–152 (KDQ) is interaction with tRNA. Cysteine 200 acts as the Cysteine persulfide intermediate in catalysis. An interaction with tRNA region spans residues 312-313 (RY).

This sequence belongs to the MnmA/TRMU family.

The protein localises to the cytoplasm. The catalysed reaction is S-sulfanyl-L-cysteinyl-[protein] + uridine(34) in tRNA + AH2 + ATP = 2-thiouridine(34) in tRNA + L-cysteinyl-[protein] + A + AMP + diphosphate + H(+). Catalyzes the 2-thiolation of uridine at the wobble position (U34) of tRNA, leading to the formation of s(2)U34. This is tRNA-specific 2-thiouridylase MnmA from Streptococcus pyogenes serotype M2 (strain MGAS10270).